The following is a 131-amino-acid chain: Histone H2B.2 (131 aa).

The segment covering 1-19 (MSAKAEKKPASKAPAEKKP) has biased composition (basic and acidic residues). Positions 1-38 (MSAKAEKKPASKAPAEKKPAAKKTAPSSDGKKRTKARK) are disordered. N6-acetyllysine; alternate occurs at positions 7 and 8. Glycyl lysine isopeptide (Lys-Gly) (interchain with G-Cter in SUMO); alternate cross-links involve residues K7 and K8. Phosphoserine is present on S11. An N6-acetyllysine modification is found at K12. At K17 the chain carries N6-acetyllysine; alternate. Residue K17 forms a Glycyl lysine isopeptide (Lys-Gly) (interchain with G-Cter in SUMO); alternate linkage. K18 is covalently cross-linked (Glycyl lysine isopeptide (Lys-Gly) (interchain with G-Cter in SUMO)). A Glycyl lysine isopeptide (Lys-Gly) (interchain with G-Cter in ubiquitin) cross-link involves residue K124.

Belongs to the histone H2B family. In terms of assembly, the nucleosome is a histone octamer containing two molecules each of H2A, H2B, H3 and H4 assembled in one H3-H4 heterotetramer and two H2A-H2B heterodimers. The octamer wraps approximately 147 bp of DNA. Monoubiquitinated by the UBC2-BRE1 complex to form H2BK123ub1. H2BK123ub1 gives a specific tag for epigenetic transcriptional activation and is also prerequisite for H3K4me and H3K79me formation. H2BK123ub1 also modulates the formation of double-strand breaks during meiosis and is a prerequisite for DNA-damage checkpoint activation. In terms of processing, phosphorylated by STE20 to form H2BS10ph during progression through meiotic prophase. May be correlated with chromosome condensation. Post-translationally, acetylated by GCN5 to form H2BK11ac and H2BK16ac. H2BK16ac can also be formed by ESA1. Acetylation of N-terminal lysines and particularly formation of H2BK11acK16ac has a positive effect on transcription. Sumoylation to form H2BK6su or H2BK7su, and probably also H2BK16su or H2BK17su, occurs preferentially near the telomeres and represses gene transcription.

It is found in the nucleus. The protein localises to the chromosome. Functionally, core component of nucleosome. Nucleosomes wrap and compact DNA into chromatin, limiting DNA accessibility to the cellular machineries which require DNA as a template. Histones thereby play a central role in transcription regulation, DNA repair, DNA replication and chromosomal stability. DNA accessibility is regulated via a complex set of post-translational modifications of histones, also called histone code, and nucleosome remodeling. This Candida glabrata (strain ATCC 2001 / BCRC 20586 / JCM 3761 / NBRC 0622 / NRRL Y-65 / CBS 138) (Yeast) protein is Histone H2B.2 (HTB2).